Reading from the N-terminus, the 86-residue chain is Small ribosomal subunit protein uS17 (86 aa).

This sequence belongs to the universal ribosomal protein uS17 family. As to quaternary structure, part of the 30S ribosomal subunit.

Functionally, one of the primary rRNA binding proteins, it binds specifically to the 5'-end of 16S ribosomal RNA. The sequence is that of Small ribosomal subunit protein uS17 from Bifidobacterium adolescentis (strain ATCC 15703 / DSM 20083 / NCTC 11814 / E194a).